Reading from the N-terminus, the 173-residue chain is Large ribosomal subunit protein uL16 (173 aa).

This sequence belongs to the universal ribosomal protein uL16 family.

This chain is Large ribosomal subunit protein uL16, found in Methanococcus maripaludis (strain C6 / ATCC BAA-1332).